The primary structure comprises 1280 residues: Pullulanase A (1280 aa).

Positions 1-44 (MRKTPSHTEKKMVYSIRSLKNGTGSVLIGASLVLLAMATPTISS) are cleaved as a signal peptide. The interval 42 to 132 (ISSDESTPTT…VTTETKAEEP (91 aa)) is disordered. The span at 48-61 (TPTTNEPNNRNTTT) shows a compositional bias: low complexity. A compositionally biased stretch (polar residues) spans 79–90 (DISSPGNANASL). The span at 115–126 (EPTTSTSPVTTE) shows a compositional bias: low complexity. Substrate-binding positions include 156 to 158 (WTW), tryptophan 168, aspartate 214, 263 to 265 (WYW), tryptophan 276, lysine 318, and asparagine 323. Residues serine 661 and tyrosine 663 each contribute to the Ca(2+) site. Substrate contacts are provided by residues 667–668 (YD) and phenylalanine 743. Catalysis depends on aspartate 778, which acts as the Nucleophile. Residue glutamate 807 is the Proton donor of the active site. Substrate is bound at residue tryptophan 809. Residues methionine 828, threonine 831, and aspartate 832 each coordinate Ca(2+). Aspartate 839, arginine 842, and tyrosine 849 together coordinate substrate. Aspartate 882 and aspartate 886 together coordinate Ca(2+). Residues asparagine 896, lysine 969, and 989 to 991 (DSY) each bind substrate. Aspartate 992 contacts Ca(2+). Residues 1140–1248 (VSQNGTSHES…TPDKQAELPN (109 aa)) form a disordered region. Positions 1149 to 1196 (STAEEKPDSTPSKPEHQNEASHPAHQDPAPEARPDSTKPDAKVADAEN) are enriched in basic and acidic residues. Low complexity predominate over residues 1205 to 1218 (SQAEQPAQEAQASS). The short motif at 1246–1250 (LPNTG) is the LPXTG sorting signal element. Pentaglycyl murein peptidoglycan amidated threonine is present on threonine 1249. The propeptide at 1250 to 1280 (GIKNENKLLFAGISLLALLGLGFLLKNKKEN) is removed by sortase.

Belongs to the glycosyl hydrolase 13 family.

Its subcellular location is the secreted. It localises to the cell wall. The protein resides in the cell surface. It catalyses the reaction Hydrolysis of (1-&gt;6)-alpha-D-glucosidic linkages in pullulan, amylopectin and glycogen, and in the alpha- and beta-limit dextrins of amylopectin and glycogen.. With respect to regulation, inhibited by 4-O-alpha-D-glucopyranosylmoranoline (G1M). Its function is as follows. Virulence factor. Involved in the degradation of glycogen of the mammalian host cells. Hydrolyzes the alpha-1,6-branchpoints of glycogen. Hydrolyzes pullulan. Does not hydrolyze dextran. Binds to mouse lung alveolar type II cells that are rich in glycogen stores. Is an alpha-glucan-specific carbohydrate-binding protein, which binds to amylose (pure alpha-(1,4)-linked glucose), amylopectin (alpha-(1,4)-linked glucose with alpha-(1,6) branch points), pullulan (linear polymer of mixed alpha-(1,4)- and alpha-(1,6)-linked glucose) and glycogen (similar to amylopectin with more frequent alpha-(1,6) branch points) in vitro. Does not bind to dextran (a linear polymer of alpha-(1,6)-linked glucose). The sequence is that of Pullulanase A from Streptococcus pneumoniae serotype 4 (strain ATCC BAA-334 / TIGR4).